Reading from the N-terminus, the 632-residue chain is Thioredoxin domain-containing protein C959.05c (632 aa).

The N-terminal stretch at 1-22 is a signal peptide; that stretch reads MKLFLYHFTFIVYYFIISFSYA. N-linked (GlcNAc...) asparagine glycans are attached at residues Asn-35, Asn-41, and Asn-140. Positions 153 to 284 constitute a Thioredoxin domain; it reads SDSSSTDPAF…LLSYSNQVAS (132 aa). A disulfide bond links Cys-209 and Cys-212. Asn-557 carries an N-linked (GlcNAc...) asparagine glycan. A helical membrane pass occupies residues 583–603; that stretch reads LIVFNLLIALLILSILTIISA.

Belongs to the protein disulfide isomerase family.

Its subcellular location is the endoplasmic reticulum membrane. It carries out the reaction Catalyzes the rearrangement of -S-S- bonds in proteins.. Functionally, acts as a membrane-bound chaperone in endoplasmic reticulum quality control. Probably facilitates presentation of substrate to membrane-bound components of the degradation machinery. This Schizosaccharomyces pombe (strain 972 / ATCC 24843) (Fission yeast) protein is Thioredoxin domain-containing protein C959.05c.